A 181-amino-acid polypeptide reads, in one-letter code: Adenylyl-sulfate kinase (181 aa).

20–27 is an ATP binding site; sequence GLSGAGKS. Residue S94 is the Phosphoserine intermediate of the active site.

This sequence belongs to the APS kinase family.

It catalyses the reaction adenosine 5'-phosphosulfate + ATP = 3'-phosphoadenylyl sulfate + ADP + H(+). It functions in the pathway sulfur metabolism; hydrogen sulfide biosynthesis; sulfite from sulfate: step 2/3. Catalyzes the synthesis of activated sulfate. This chain is Adenylyl-sulfate kinase, found in Deinococcus deserti (strain DSM 17065 / CIP 109153 / LMG 22923 / VCD115).